Reading from the N-terminus, the 256-residue chain is MYPNRHRRASFCSQPRTYPRNSLIRQQSLFKRNVSKRRPFQTVKMVDDSMMKAQRIHENQYGPDFSLAHNTAVSTFISYPDIAKSLPNRTRSYIKLKRLRFKGIVKVERVHVEVNMDCSVPKTEGVFSLVIVVDRKPHLGPSGGLPTFDELFGARIHSHGNLAIVPSLKDRFYIRHVLKRVISVEKDTMMVDIEGVVALSSRRFNCWAGFKDLDIESRKGVYDNINKNALLVYYCWMSDTVSKASTFVSFDLDYIG.

Residues 21–42 (NSLIRQQSLFKRNVSKRRPFQT) carry the Bipartite nuclear localization signal motif. A Nuclear localization signal motif is present at residues 81 to 96 (DIAKSLPNRTRSYIKL). An interaction with Arabidopsis thaliana NSI protein region spans residues 150–187 (ELFGARIHSHGNLAIVPSLKDRFYIRHVLKRVISVEKD).

The protein belongs to the begomovirus nuclear shuttle protein family. As to quaternary structure, binds to single-stranded and double-stranded viral DNA. Interacts with the host nuclear shuttle interacting (NSI) protein. This interaction may allow NSP to recruit NSI monomers to the viral genome and thus regulate nuclear export of viral genome by NSP.

It is found in the host nucleus. The protein resides in the host cytoplasm. The protein localises to the host cell membrane. In terms of biological role, binds to the genomic viral ssDNA, shuttles it into and out of the cell nucleus. Begomoviruses use 2 proteins to transport their DNA from cell to cell. The nuclear shuttle protein (NSP) shuttles it between nucleus and cytoplasm and the movement protein (MP) probably transports the DNA-NSP complex to the cell periphery and facilitates movement across the cell wall. The polypeptide is Nuclear shuttle protein (Potato yellow mosaic virus (isolate Venezuela) (PYMV)).